Reading from the N-terminus, the 376-residue chain is Chaperone protein DnaJ (376 aa).

A J domain is found at 5–70; the sequence is DYYEILGVSK…QKRAAYDQYG (66 aa). The segment at 131–209 adopts a CR-type zinc-finger fold; that stretch reads GVTKEIRIPT…CHGHGRVERS (79 aa). The Zn(2+) site is built by Cys-144, Cys-147, Cys-161, Cys-164, Cys-183, Cys-186, Cys-197, and Cys-200. CXXCXGXG motif repeat units lie at residues 144 to 151, 161 to 168, 183 to 190, and 197 to 204; these read CDVCHGSG, CPTCHGSG, CPHCQGRG, and CNKCHGHG.

The protein belongs to the DnaJ family. Homodimer. Zn(2+) serves as cofactor.

The protein localises to the cytoplasm. Its function is as follows. Participates actively in the response to hyperosmotic and heat shock by preventing the aggregation of stress-denatured proteins and by disaggregating proteins, also in an autonomous, DnaK-independent fashion. Unfolded proteins bind initially to DnaJ; upon interaction with the DnaJ-bound protein, DnaK hydrolyzes its bound ATP, resulting in the formation of a stable complex. GrpE releases ADP from DnaK; ATP binding to DnaK triggers the release of the substrate protein, thus completing the reaction cycle. Several rounds of ATP-dependent interactions between DnaJ, DnaK and GrpE are required for fully efficient folding. Also involved, together with DnaK and GrpE, in the DNA replication of plasmids through activation of initiation proteins. This is Chaperone protein DnaJ from Shigella boydii serotype 18 (strain CDC 3083-94 / BS512).